Consider the following 318-residue polypeptide: L-lactate dehydrogenase (318 aa).

13-41 (SNVGSAVANKIADFQLATEVVLIDLNEDK) contributes to the NAD(+) binding site. Residues R93, N125, and R156 each contribute to the substrate site. NAD(+) is bound at residue N125. H180 (proton acceptor) is an active-site residue. Y225 is subject to Phosphotyrosine. T234 is a binding site for substrate.

The protein belongs to the LDH/MDH superfamily. LDH family. As to quaternary structure, homotetramer.

It is found in the cytoplasm. It catalyses the reaction (S)-lactate + NAD(+) = pyruvate + NADH + H(+). It participates in fermentation; pyruvate fermentation to lactate; (S)-lactate from pyruvate: step 1/1. The sequence is that of L-lactate dehydrogenase (ldh) from Selenomonas ruminantium.